The chain runs to 383 residues: Teichoic acid glycerol-phosphate primase (383 aa).

The protein belongs to the CDP-glycerol glycerophosphotransferase family.

It localises to the cell membrane. The enzyme catalyses N-acetyl-beta-D-mannosaminyl-(1-&gt;4)-N-acetyl-alpha-D-glucosaminyl di-trans,octa-cis-undecaprenyl diphosphate + CDP-glycerol = 4-O-[(2R)-glycerylphospho]-N-acetyl-beta-D-mannosaminyl-(1-&gt;4)-N-acetyl-alpha-D-glucosaminyl di-trans,octa-cis-undecaprenyl diphosphate + CMP + H(+). The protein operates within cell wall biogenesis; poly(ribitol phosphate) teichoic acid biosynthesis. In terms of biological role, catalyzes the addition of a single glycerol phosphate residue to the prenoldiphosphate-linked disaccharide. The protein is Teichoic acid glycerol-phosphate primase (tarB) of Bacillus spizizenii (strain ATCC 23059 / NRRL B-14472 / W23) (Bacillus subtilis subsp. spizizenii).